Consider the following 385-residue polypeptide: GPN-loop GTPase 1 (385 aa).

Position 13–18 (13–18 (GSGKTT)) interacts with GTP. The short motif at 70-72 (GPN) is the Gly-Pro-Asn (GPN)-loop; involved in dimer interface element. GTP is bound at residue 173–176 (NKTD). Ser-304, Ser-308, and Ser-313 each carry phosphoserine. The span at 317–332 (EDANDGLVDRDEDEGV) shows a compositional bias: acidic residues. Residues 317–356 (EDANDGLVDRDEDEGVEREYTFPGEERTKGEVNENSAPDL) form a disordered region. Residues 333-348 (EREYTFPGEERTKGEV) are compositionally biased toward basic and acidic residues. The residue at position 352 (Ser-352) is a Phosphoserine. Lys-369 participates in a covalent cross-link: Glycyl lysine isopeptide (Lys-Gly) (interchain with G-Cter in ubiquitin).

It belongs to the GPN-loop GTPase family. Heterodimers with GPN2 or GPN3. Binds to RNA polymerase II (RNAPII) in a GTP-dependent manner. Interacts with nuclear pore protein NUP133 and nuclear export factor CRM1. Interacts with PCL1. Phosphorylated by the cyclin-CDK PCL1-PHO85.

The protein resides in the cytoplasm. Small GTPase required for proper nuclear import of RNA polymerase II (RNAPII). May act at an RNAP assembly step prior to nuclear import. Promotes sister chromatid separation during anaphase. This Saccharomyces cerevisiae (strain ATCC 204508 / S288c) (Baker's yeast) protein is GPN-loop GTPase 1.